The sequence spans 127 residues: Protein chibby homolog 1 (127 aa).

Over residues 1–10 (MPLFGSTFSP) the composition is skewed to polar residues. Positions 1 to 26 (MPLFGSTFSPKKTPPRKSASLSNLHN) are disordered. Ser-9 and Ser-20 each carry phosphoserine. The interval 60–112 (IAETGISGGVDRREAQRLRRRNQQLEEENNLLRLKVDILLDMLSETTAESHLM) is minimal region for the interaction with PKD2. The stretch at 68–125 (GVDRREAQRLRRRNQQLEEENNLLRLKVDILLDMLSETTAESHLMEKELDELKSVSRR) forms a coiled coil. A leucine-zipper; mediates homodimerization region spans residues 77–98 (LRRRNQQLEEENNLLRLKVDIL).

This sequence belongs to the chibby family. As to quaternary structure, homodimer. Homodimerization is essential for nuclear localization and interaction with KPNA4 but is dispensable for interaction with CTNNB1. Interacts with polycystin-2/PKD2 and GM130. Interacts with the C-terminal region of CTNNB1. Interacts (C-terminus) with TCIM (C-terminus), TCIM competes with CTNNB1 for the interaction with CBY1. Interacts with FAM92A; this interaction facilitates targeting of FAM92A to cilium basal body. Interacts with CIBAR2. Interacts with KPNA4.

The protein localises to the nucleus speckle. It is found in the cytoplasm. It localises to the cytoskeleton. The protein resides in the cilium basal body. Its subcellular location is the microtubule organizing center. The protein localises to the centrosome. It is found in the centriole. It localises to the golgi apparatus. The protein resides in the trans-Golgi network. Its subcellular location is the cell projection. The protein localises to the cilium. It is found in the flagellum. It localises to the nucleus. In terms of biological role, inhibits the Wnt/Wingless pathway by binding to CTNNB1/beta-catenin and inhibiting beta-catenin-mediated transcriptional activation through competition with TCF/LEF transcription factors. Has also been shown to play a role in regulating the intracellular trafficking of polycystin-2/PKD2 and possibly of other intracellular proteins. Promotes adipocyte and cardiomyocyte differentiation. In Bos taurus (Bovine), this protein is Protein chibby homolog 1 (CBY1).